The sequence spans 166 residues: MPPKVDPSEKVEVFLRVCGGEAGAMSTLAPKLGPLGVSPKKVGDDIAKATQPWKGMKVSVKLTIQNRIAVPEVLPSASALVIKALKEPPRDRKKEKNIKHNGNIPLEEICKIAKTMRFKSLAVDFKGSVLEILGTAHSVGCKVNGKSPRDIQAGIQSGEIEVVEPK.

This sequence belongs to the universal ribosomal protein uL11 family.

The polypeptide is Large ribosomal subunit protein uL11 (rpl12) (Dictyostelium discoideum (Social amoeba)).